A 106-amino-acid polypeptide reads, in one-letter code: Gibberellin-regulated protein 4 (106 aa).

The first 25 residues, 1–25, serve as a signal peptide directing secretion; sequence MAKSYGAIFLLTLIVLFMLQTMVMA.

Belongs to the GASA family. Six disulfide bonds may be present. As to expression, expressed in flower buds, style, stamen filaments, vasculature of petals, root phloem, vasculature of cotyledons and rosette leaves and developing embryo.

It localises to the secreted. Gibberellin-regulated protein involved in the regulation of floral meristem and floral organ identity, and promotion of seed size and weight. May play a role in the promotion of gibberellin responses such as regulation of flowering under short-day conditions, seed germination and inhibition of gibberellin oxidase. Possesses redox activity in E.coli and may function in redox regulation in planta. The polypeptide is Gibberellin-regulated protein 4 (GASA4) (Arabidopsis thaliana (Mouse-ear cress)).